Reading from the N-terminus, the 220-residue chain is Urease accessory protein UreF (220 aa).

This sequence belongs to the UreF family. UreD, UreF and UreG form a complex that acts as a GTP-hydrolysis-dependent molecular chaperone, activating the urease apoprotein by helping to assemble the nickel containing metallocenter of UreC. The UreE protein probably delivers the nickel.

The protein localises to the cytoplasm. In terms of biological role, required for maturation of urease via the functional incorporation of the urease nickel metallocenter. The sequence is that of Urease accessory protein UreF from Bordetella bronchiseptica (strain ATCC BAA-588 / NCTC 13252 / RB50) (Alcaligenes bronchisepticus).